Here is a 305-residue protein sequence, read N- to C-terminus: Protoheme IX farnesyltransferase (305 aa).

A run of 9 helical transmembrane segments spans residues 31-51 (VMSLVIFTGFVGIWLAPYSVH), 52-72 (PFIAGIAVVCIALGAGSAGAI), 102-119 (ALSFGLITGFFAVFFMAL), 123-145 (LLASFLLLFTIFYYICIYTIWLK), 151-171 (NIVIGGVSGALPPVIGYAAVS), 179-199 (IILFLIIFIWTPPHSWALALF), 225-245 (ILIYSILLFIVSLMPFFIGMN), 247-267 (FIYLITSGILGLVFLYYSGSL), and 284-304 (SIFYLFFIFLLLSSTSTISLI).

It belongs to the UbiA prenyltransferase family. Protoheme IX farnesyltransferase subfamily.

It localises to the cell inner membrane. The catalysed reaction is heme b + (2E,6E)-farnesyl diphosphate + H2O = Fe(II)-heme o + diphosphate. The protein operates within porphyrin-containing compound metabolism; heme O biosynthesis; heme O from protoheme: step 1/1. Converts heme B (protoheme IX) to heme O by substitution of the vinyl group on carbon 2 of heme B porphyrin ring with a hydroxyethyl farnesyl side group. The polypeptide is Protoheme IX farnesyltransferase (Rickettsia felis (strain ATCC VR-1525 / URRWXCal2) (Rickettsia azadi)).